Reading from the N-terminus, the 32-residue chain is Photosystem II reaction center protein T (32 aa).

Residues alanine 3–phenylalanine 23 form a helical membrane-spanning segment.

Belongs to the PsbT family. As to quaternary structure, PSII is composed of 1 copy each of membrane proteins PsbA, PsbB, PsbC, PsbD, PsbE, PsbF, PsbH, PsbI, PsbJ, PsbK, PsbL, PsbM, PsbT, PsbX, PsbY, PsbZ, Psb30/Ycf12, at least 3 peripheral proteins of the oxygen-evolving complex and a large number of cofactors. It forms dimeric complexes.

The protein localises to the plastid. It is found in the chloroplast thylakoid membrane. Functionally, found at the monomer-monomer interface of the photosystem II (PS II) dimer, plays a role in assembly and dimerization of PSII. PSII is a light-driven water plastoquinone oxidoreductase, using light energy to abstract electrons from H(2)O, generating a proton gradient subsequently used for ATP formation. The protein is Photosystem II reaction center protein T of Trieres chinensis (Marine centric diatom).